The chain runs to 50 residues: Defensin-like protein 1 (50 aa).

Intrachain disulfides connect C3–C50, C14–C35, C20–C44, and C24–C46.

The protein belongs to the DEFL family.

The protein resides in the secreted. Functionally, possesses antimicrobial activity sensitive to inorganic cations. Has no inhibitory effect on insect gut alpha-amylase. Induces potential changes in fungal membranes and increased K+ efflux and Ca(2+) uptake. Interacts with sphingolipids and ergosterols found in fungal plasma membranes. This chain is Defensin-like protein 1, found in Dahlia merckii (Bedding dahlia).